The sequence spans 758 residues: 5-methyltetrahydropteroyltriglutamate--homocysteine methyltransferase (758 aa).

5-methyltetrahydropteroyltri-L-glutamate contacts are provided by residues 16-19 (RELK) and Lys-116. Residues 436 to 438 (IGS) and Glu-489 contribute to the L-homocysteine site. Residues 436 to 438 (IGS) and Glu-489 contribute to the L-methionine site. Residues 520–521 (RC) and Trp-566 contribute to the 5-methyltetrahydropteroyltri-L-glutamate site. Asp-604 is a binding site for L-homocysteine. Asp-604 lines the L-methionine pocket. Residue Glu-610 participates in 5-methyltetrahydropteroyltri-L-glutamate binding. Residues His-646, Cys-648, and Glu-670 each contribute to the Zn(2+) site. Residue His-699 is the Proton donor of the active site. Zn(2+) is bound at residue Cys-731.

The protein belongs to the vitamin-B12 independent methionine synthase family. The cofactor is Zn(2+).

The catalysed reaction is 5-methyltetrahydropteroyltri-L-glutamate + L-homocysteine = tetrahydropteroyltri-L-glutamate + L-methionine. It functions in the pathway amino-acid biosynthesis; L-methionine biosynthesis via de novo pathway; L-methionine from L-homocysteine (MetE route): step 1/1. In terms of biological role, catalyzes the transfer of a methyl group from 5-methyltetrahydrofolate to homocysteine resulting in methionine formation. This Xylella fastidiosa (strain M12) protein is 5-methyltetrahydropteroyltriglutamate--homocysteine methyltransferase.